We begin with the raw amino-acid sequence, 358 residues long: Plastoglobulin-1, chloroplastic (358 aa).

A chloroplast-targeting transit peptide spans 1 to 47 (MALLSSTLRAPLVFSKNPKPVSLSSLHSRIYLSPRSPRFPSLRFISA). A disordered region spans residues 48-114 (AGDTGDAEKP…NDAGNGTPTF (67 aa)).

The protein belongs to the PAP/fibrillin family.

It is found in the plastid. The protein localises to the chloroplast. In terms of biological role, may form together with other plastoglobulins a coat on the surface of the lipoprotein particle. The coat may contain receptors for attachment to the thylakoid membrane as well as regulatory proteins that may function in the transfer of lipids to and from the thylakoid membranes. This is Plastoglobulin-1, chloroplastic (PG1) from Pisum sativum (Garden pea).